The primary structure comprises 251 residues: MPLQNVKVADEGSVNFQKVKEECITAMESLHKVVACYRHLALTIGGSSDSIHLRDELRRTRERAQELALSNRNKLTTALRDKKLSKKDREELERLWVEFSSCLELFHNDMCKVYELGMAVPHSATNKPAIQTGSTGNTSAIASRALNVQNINYSDSPANKASLEYQEIEEEILKVDNMITDMEMKVNVLRWTVEANTRMNDELKSTHDSSSVVLLSEEESNSKGCCSDGQLIVFLLLCGTALVAITLYSIL.

Residues 1–230 (MPLQNVKVAD…NSKGCCSDGQ (230 aa)) lie on the Cytoplasmic side of the membrane. Coiled-coil stretches lie at residues 52–94 (HLRD…ELER) and 158–187 (ANKASLEYQEIEEEILKVDNMITDMEMKVN). Residues 231 to 250 (LIVFLLLCGTALVAITLYSI) form a helical; Anchor for type IV membrane protein membrane-spanning segment. Leu-251 is a topological domain (extracellular).

This sequence belongs to the RGS7BP/RGS9BP family.

Its subcellular location is the membrane. Regulator of G protein-coupled receptor (GPCR) signaling. Probably acts by regulating the activity of some 'R7' family protein (RGS6, RGS7, RGS9 and/or RGS11). In Xenopus laevis (African clawed frog), this protein is Regulator of G-protein signaling 9-binding protein B (rgs9bp-b).